The chain runs to 610 residues: Dihydroxy-acid dehydratase (610 aa).

Position 81 (Asp81) interacts with Mg(2+). Cys122 is a binding site for [2Fe-2S] cluster. Positions 123 and 124 each coordinate Mg(2+). N6-carboxylysine is present on Lys124. Cys193 serves as a coordination point for [2Fe-2S] cluster. Glu489 is a Mg(2+) binding site. Ser515 (proton acceptor) is an active-site residue.

It belongs to the IlvD/Edd family. As to quaternary structure, homodimer. Requires [2Fe-2S] cluster as cofactor. It depends on Mg(2+) as a cofactor.

It carries out the reaction (2R)-2,3-dihydroxy-3-methylbutanoate = 3-methyl-2-oxobutanoate + H2O. The catalysed reaction is (2R,3R)-2,3-dihydroxy-3-methylpentanoate = (S)-3-methyl-2-oxopentanoate + H2O. It functions in the pathway amino-acid biosynthesis; L-isoleucine biosynthesis; L-isoleucine from 2-oxobutanoate: step 3/4. The protein operates within amino-acid biosynthesis; L-valine biosynthesis; L-valine from pyruvate: step 3/4. Functionally, functions in the biosynthesis of branched-chain amino acids. Catalyzes the dehydration of (2R,3R)-2,3-dihydroxy-3-methylpentanoate (2,3-dihydroxy-3-methylvalerate) into 2-oxo-3-methylpentanoate (2-oxo-3-methylvalerate) and of (2R)-2,3-dihydroxy-3-methylbutanoate (2,3-dihydroxyisovalerate) into 2-oxo-3-methylbutanoate (2-oxoisovalerate), the penultimate precursor to L-isoleucine and L-valine, respectively. In Xylella fastidiosa (strain 9a5c), this protein is Dihydroxy-acid dehydratase.